Consider the following 147-residue polypeptide: Large ribosomal subunit protein uL13 (147 aa).

This sequence belongs to the universal ribosomal protein uL13 family. Part of the 50S ribosomal subunit.

Its function is as follows. This protein is one of the early assembly proteins of the 50S ribosomal subunit, although it is not seen to bind rRNA by itself. It is important during the early stages of 50S assembly. This is Large ribosomal subunit protein uL13 from Lactiplantibacillus plantarum (strain ATCC BAA-793 / NCIMB 8826 / WCFS1) (Lactobacillus plantarum).